The sequence spans 85 residues: Anti-neuroexcitation peptide 2 (85 aa).

The first 21 residues, 1 to 21, serve as a signal peptide directing secretion; sequence MKLSLLLVISASMLIDGLVNA. An LCN-type CS-alpha/beta domain is found at 22–82; that stretch reads DGYIRGSNGC…TWKSESNTCG (61 aa). 4 disulfide bridges follow: Cys31/Cys81, Cys35/Cys56, Cys42/Cys63, and Cys46/Cys65.

Belongs to the long (4 C-C) scorpion toxin superfamily. Sodium channel inhibitor family. Beta subfamily. Expressed by the venom gland.

It is found in the secreted. Functionally, binds to sodium channels (Nav) and inhibits them. Recombinant ANEP delays the convulsion seizure of insect models by 18% and shows anti-neuroexcitatory activity. This chain is Anti-neuroexcitation peptide 2, found in Olivierus martensii (Manchurian scorpion).